Here is a 182-residue protein sequence, read N- to C-terminus: Lipoprotein signal peptidase (182 aa).

Helical transmembrane passes span 12 to 32, 40 to 60, 70 to 90, and 97 to 117; these read FLWI…TVID, IQVL…AFSF, WFFT…LKQS, and LPVA…DRLV. Active-site residues include Asp123 and Asp141. The helical transmembrane segment at 136–156 threads the bilayer; that stretch reads AFNIADSAIFIGAALLIIDMF. Residues 161–182 form a disordered region; it reads KKSEENGAESKAGSANSSETIK. The span at 173–182 shows a compositional bias: polar residues; that stretch reads GSANSSETIK.

Belongs to the peptidase A8 family.

Its subcellular location is the cell inner membrane. It carries out the reaction Release of signal peptides from bacterial membrane prolipoproteins. Hydrolyzes -Xaa-Yaa-Zaa-|-(S,diacylglyceryl)Cys-, in which Xaa is hydrophobic (preferably Leu), and Yaa (Ala or Ser) and Zaa (Gly or Ala) have small, neutral side chains.. The protein operates within protein modification; lipoprotein biosynthesis (signal peptide cleavage). Its function is as follows. This protein specifically catalyzes the removal of signal peptides from prolipoproteins. The protein is Lipoprotein signal peptidase of Alteromonas mediterranea (strain DSM 17117 / CIP 110805 / LMG 28347 / Deep ecotype).